The following is a 135-amino-acid chain: MKRVGILNSTISEMVANMGHTDMLAIVDMGFPIPDGAKKVDLVVDKGKPGLLEVVEVILKELEVEKIILAEEMNEKNPETRDLLINLVGKNNSNVKIEFVPHEEFKKISRTSKGFVRTGADRPYSNVILVSGVIF.

H20 serves as the catalytic Proton donor. Substrate-binding positions include D28, H102, and 124-126; that span reads YSN.

This sequence belongs to the RbsD / FucU family. RbsD subfamily. As to quaternary structure, homodecamer.

The protein resides in the cytoplasm. The catalysed reaction is beta-D-ribopyranose = beta-D-ribofuranose. It participates in carbohydrate metabolism; D-ribose degradation; D-ribose 5-phosphate from beta-D-ribopyranose: step 1/2. Its function is as follows. Catalyzes the interconversion of beta-pyran and beta-furan forms of D-ribose. In Thermotoga petrophila (strain ATCC BAA-488 / DSM 13995 / JCM 10881 / RKU-1), this protein is D-ribose pyranase.